We begin with the raw amino-acid sequence, 482 residues long: Mannose-1-phosphate guanylyltransferase 2 (482 aa).

It belongs to the mannose-6-phosphate isomerase type 2 family.

The catalysed reaction is alpha-D-mannose 1-phosphate + GTP + H(+) = GDP-alpha-D-mannose + diphosphate. It functions in the pathway nucleotide-sugar biosynthesis; GDP-alpha-D-mannose biosynthesis; GDP-alpha-D-mannose from alpha-D-mannose 1-phosphate (GTP route): step 1/1. In terms of biological role, involved in GDP-mannose biosynthesis which serves as the activated sugar nucleotide precursor for mannose residues in cell surface polysaccharides. This enzyme participates in synthesis of the LPS O antigen. The chain is Mannose-1-phosphate guanylyltransferase 2 (manC2) from Escherichia coli O157:H7.